The sequence spans 133 residues: Transcriptional regulator MraZ (133 aa).

2 SpoVT-AbrB domains span residues 5 to 47 (TYEH…SKDD) and 76 to 119 (TVEI…SKNK).

This sequence belongs to the MraZ family. Forms oligomers.

It is found in the cytoplasm. Its subcellular location is the nucleoid. The sequence is that of Transcriptional regulator MraZ from Mycoplasma mycoides subsp. mycoides SC (strain CCUG 32753 / NCTC 10114 / PG1).